Consider the following 838-residue polypeptide: DNA gyrase subunit A (838 aa).

The 470-residue stretch at 41 to 510 folds into the Topo IIA-type catalytic domain; that stretch reads LPEVRDGLKP…ADGDVSDEDL (470 aa). The O-(5'-phospho-DNA)-tyrosine intermediate role is filled by Tyr129. Residues 537-543 carry the GyrA-box motif; it reads QKRGGKG.

The protein belongs to the type II topoisomerase GyrA/ParC subunit family. Heterotetramer, composed of two GyrA and two GyrB chains. In the heterotetramer, GyrA contains the active site tyrosine that forms a transient covalent intermediate with DNA, while GyrB binds cofactors and catalyzes ATP hydrolysis.

It localises to the cytoplasm. The enzyme catalyses ATP-dependent breakage, passage and rejoining of double-stranded DNA.. In terms of biological role, a type II topoisomerase that negatively supercoils closed circular double-stranded (ds) DNA in an ATP-dependent manner to modulate DNA topology and maintain chromosomes in an underwound state. Negative supercoiling favors strand separation, and DNA replication, transcription, recombination and repair, all of which involve strand separation. Also able to catalyze the interconversion of other topological isomers of dsDNA rings, including catenanes and knotted rings. Type II topoisomerases break and join 2 DNA strands simultaneously in an ATP-dependent manner. This chain is DNA gyrase subunit A, found in Mycobacterium tuberculosis (strain CDC 1551 / Oshkosh).